The chain runs to 484 residues: Zinc metalloproteinase-disintegrin BlatH1 (484 aa).

Residues 1–20 (MIQVLLVTICLAALPYQGSS) form the signal peptide. The propeptide occupies 21 to 190 (IILESGNVND…KKASQSNLTP (170 aa)). Position 191 is a pyrrolidone carboxylic acid (Glu) (Glu-191). A Peptidase M12B domain is found at 199–395 (KYVELVIVAD…QNSQCILNEP (197 aa)). Glu-202 is a binding site for Ca(2+). Asn-259 carries an N-linked (GlcNAc...) asparagine glycan. Asp-286 contributes to the Ca(2+) binding site. The N-linked (GlcNAc...) asparagine glycan is linked to Asn-297. Disulfide bonds link Cys-310–Cys-390, Cys-350–Cys-374, and Cys-352–Cys-357. His-335 contributes to the Zn(2+) binding site. Residue Glu-336 is part of the active site. The Zn(2+) site is built by His-339 and His-345. N-linked (GlcNAc...) asparagine glycosylation is present at Asn-373. Ca(2+) is bound by residues Cys-390, Asn-393, Val-405, Asn-408, Glu-412, Glu-415, and Asp-418. The 82-residue stretch at 403–484 (PPVCGNEILE…GQSADCPSNG (82 aa)) folds into the Disintegrin domain. 7 cysteine pairs are disulfide-bonded: Cys-406–Cys-425, Cys-417–Cys-435, Cys-419–Cys-430, Cys-429–Cys-452, Cys-443–Cys-449, Cys-448–Cys-473, and Cys-461–Cys-480. The short motif at 465-467 (TDN) is the TDN-tripeptide element.

It belongs to the venom metalloproteinase (M12B) family. P-II subfamily. P-IIc sub-subfamily. As to quaternary structure, homodimer. Requires Zn(2+) as cofactor. Post-translationally, the N-terminus is blocked. As to expression, expressed by the venom gland.

It is found in the secreted. Platelet aggregation in inhibited by the metalloproteinase inhibitors EDTA and Batimastat. The hemorrhagic activity is not inhibited by the plasma proteinase inhibitor alpha2-macroglobulin, although the SVMP is able to cleave this plasma inhibitor, generating a 90 kDa product. Functionally, snake venom zinc metalloprotease-disintegrin that hydrolyzes azocasein, gelatin and fibrinogen (Aalpha and Bbeta chains and partially gamma-chain), and exerts a potent local and systemic hemorrhagic activity in mice. It inhibits ADP- and collagen-induced human platelet aggregation (IC(50) = 0.3 uM and 0.7 uM for ADP and collagen, respectively). This inhibition is dependent of protease activity, and probably occurs through the degradation of an unknown platelet receptor. The sequence is that of Zinc metalloproteinase-disintegrin BlatH1 from Bothriechis lateralis (Side-striped palm pitviper).